The sequence spans 361 residues: Queuine tRNA-ribosyltransferase (361 aa).

The Proton acceptor role is filled by Asp92. Substrate is bound by residues 92-96 (DSGGF), Asp146, Gln189, and Gly216. An RNA binding region spans residues 247-253 (GVGKPAD). Catalysis depends on Asp266, which acts as the Nucleophile. Residues 271–275 (TRSGR) form an RNA binding; important for wobble base 34 recognition region. Zn(2+) contacts are provided by Cys304, Cys306, Cys309, and His335.

This sequence belongs to the queuine tRNA-ribosyltransferase family. As to quaternary structure, homodimer. Within each dimer, one monomer is responsible for RNA recognition and catalysis, while the other monomer binds to the replacement base PreQ1. Requires Zn(2+) as cofactor.

The enzyme catalyses 7-aminomethyl-7-carbaguanine + guanosine(34) in tRNA = 7-aminomethyl-7-carbaguanosine(34) in tRNA + guanine. The protein operates within tRNA modification; tRNA-queuosine biosynthesis. Catalyzes the base-exchange of a guanine (G) residue with the queuine precursor 7-aminomethyl-7-deazaguanine (PreQ1) at position 34 (anticodon wobble position) in tRNAs with GU(N) anticodons (tRNA-Asp, -Asn, -His and -Tyr). Catalysis occurs through a double-displacement mechanism. The nucleophile active site attacks the C1' of nucleotide 34 to detach the guanine base from the RNA, forming a covalent enzyme-RNA intermediate. The proton acceptor active site deprotonates the incoming PreQ1, allowing a nucleophilic attack on the C1' of the ribose to form the product. After dissociation, two additional enzymatic reactions on the tRNA convert PreQ1 to queuine (Q), resulting in the hypermodified nucleoside queuosine (7-(((4,5-cis-dihydroxy-2-cyclopenten-1-yl)amino)methyl)-7-deazaguanosine). This is Queuine tRNA-ribosyltransferase from Rickettsia akari (strain Hartford).